Consider the following 464-residue polypeptide: F-box/WD repeat-containing protein 12 (464 aa).

The 45-residue stretch at 1–45 folds into the F-box domain; the sequence is MEIRLPDLALKRIFSFLDLFGLLQVSQVNKHWNRIADSDYLWRSL. WD repeat units follow at residues 89–132, 136–174, 178–217, 222–263, 270–315, 320–367, 370–407, and 416–461; these read YKVT…CAWD, GTMI…KVWN, RDAL…YTFT, RDVS…FLTE, EGSV…ITFD, KTGG…LLFS, GFLL…YMWE, and RSCC…VMYS.

As to quaternary structure, interacts with SKP1. Interacts with CUL1. Interacts with IL22RA1. Ubiquitously expressed.

The protein operates within protein modification; protein ubiquitination. Substrate-recognition component of the SCF (SKP1-CUL1-F-box protein)-type E3 ubiquitin ligase complex. Promotes degradation of interleukin-22 receptor subunit IL22RA1 in resting and IL22-stimulated conditions by facilitating its ubiquitination. Functions as a cell growth suppressor. The sequence is that of F-box/WD repeat-containing protein 12 (FBXW12) from Homo sapiens (Human).